Reading from the N-terminus, the 197-residue chain is Protein shisa-4 (197 aa).

An N-terminal signal peptide occupies residues Met1–Ala27. Residues Gly28 to Ala87 are Extracellular-facing. A helical transmembrane segment spans residues Gly88–Leu108. At Cys109–Ala197 the chain is on the cytoplasmic side.

It belongs to the shisa family.

The protein localises to the membrane. This Homo sapiens (Human) protein is Protein shisa-4 (SHISA4).